The following is a 2522-amino-acid chain: Neurogenic locus notch homolog protein 1 (2522 aa).

The first 19 residues, 1 to 19 (MYRIGLLVLIWSLLGLAQG), serve as a signal peptide directing secretion. EGF-like domains lie at 20 to 57 (LRCT…ERCQ), 58 to 99 (YPNP…KVCL), 102 to 140 (VDNA…DSCQ), and 141 to 177 (QADP…ATCK). Residues 20–1730 (LRCTQTAEMC…ETAKPPPPLY (1711 aa)) are Extracellular-facing. Intrachain disulfides connect Cys22–Cys35, Cys29–Cys45, Cys47–Cys56, Cys62–Cys74, Cys68–Cys87, Cys89–Cys98, Cys106–Cys117, Cys111–Cys128, Cys130–Cys139, Cys145–Cys156, Cys150–Cys165, Cys167–Cys176, Cys183–Cys194, Cys188–Cys203, Cys205–Cys214, Cys221–Cys232, Cys226–Cys242, Cys244–Cys253, Cys260–Cys271, Cys265–Cys280, Cys282–Cys291, Cys298–Cys311, Cys305–Cys320, Cys322–Cys331, Cys338–Cys349, Cys343–Cys358, Cys360–Cys369, Cys375–Cys386, Cys380–Cys397, Cys399–Cys408, Cys415–Cys428, Cys422–Cys437, and Cys439–Cys448. One can recognise an EGF-like 5; calcium-binding domain in the interval 179–215 (DINECSQNPCRNGGQCLNEFGSYRCNCQNRFTGRNCE). Positions 217–254 (PYVPCNPSPCLNGGTCRQTDDTSYECTCLPGFSGQNCE) constitute an EGF-like 6 domain. The O-linked (Fuc...) threonine; alternate glycan is linked to Thr231. Thr231 is a glycosylation site (O-linked (GalNAc...) threonine; alternate). In terms of domain architecture, EGF-like 7; calcium-binding spans 256-292 (NIDDCPSNNCRNGGTCVDGVNTYNCQCPPDWTGQYCT). One can recognise an EGF-like 8; calcium-binding domain in the interval 294–332 (DVDECQLMPNACQNGGTCHNTYGGYNCVCVNGWTGEDCS). The 37-residue stretch at 334-370 (NIDDCANAACHSGATCHDRVASFFCECPHGRTGLLCH) folds into the EGF-like 9; calcium-binding domain. In terms of domain architecture, EGF-like 10 spans 371–409 (LDNACISNPCNEGSNCDTNPVNGKAICTCPPGYTGPACN). The 39-residue stretch at 411–449 (DVDECSLGANPCEHGGRCTNTLGSFQCNCPQGYAGPRCE) folds into the EGF-like 11; calcium-binding domain. Positions 431 and 434 each coordinate Ca(2+). Ser434 is a glycosylation site (O-linked (Glc...) serine). Residues Asp451, Val452, and Glu454 each coordinate Ca(2+). The EGF-like 12; calcium-binding domain occupies 451-487 (DVNECLSNPCQNDATCLDQIGEFQCICMPGYEGLYCE). Cystine bridges form between Cys455-Cys466, Cys460-Cys475, and Cys477-Cys486. O-linked (Glc...) serine glycosylation is present at Ser457. Thr465 carries O-linked (Fuc...) threonine glycosylation. Positions 468 and 469 each coordinate Ca(2+). Ca(2+) contacts are provided by Asn489, Ile490, and Glu492. An EGF-like 13; calcium-binding domain is found at 489 to 525 (NIDECASNPCLHNGKCVDKINEFHCECPTGFNGNLCQ). Cystine bridges form between Cys493–Cys504, Cys498–Cys513, Cys515–Cys524, Cys531–Cys542, Cys536–Cys551, Cys553–Cys562, Cys569–Cys579, Cys574–Cys588, Cys590–Cys599, Cys606–Cys617, Cys611–Cys626, Cys628–Cys637, Cys644–Cys654, Cys649–Cys663, Cys665–Cys674, Cys681–Cys692, Cys686–Cys701, Cys703–Cys712, Cys719–Cys729, Cys724–Cys738, Cys740–Cys749, Cys756–Cys767, Cys761–Cys776, Cys778–Cys787, Cys794–Cys805, Cys799–Cys814, Cys816–Cys825, Cys832–Cys843, Cys837–Cys854, Cys856–Cys865, Cys872–Cys883, Cys877–Cys892, Cys894–Cys903, Cys910–Cys921, Cys915–Cys930, Cys932–Cys941, Cys948–Cys959, Cys953–Cys968, Cys970–Cys979, Cys986–Cys997, Cys991–Cys1006, Cys1008–Cys1017, Cys1024–Cys1035, Cys1029–Cys1044, Cys1046–Cys1055, Cys1062–Cys1073, Cys1067–Cys1082, Cys1084–Cys1093, Cys1100–Cys1121, Cys1115–Cys1130, Cys1132–Cys1141, Cys1148–Cys1159, Cys1153–Cys1168, Cys1170–Cys1179, Cys1186–Cys1197, Cys1191–Cys1206, Cys1208–Cys1217, Cys1224–Cys1243, Cys1237–Cys1252, Cys1254–Cys1263, Cys1270–Cys1283, Cys1275–Cys1292, Cys1294–Cys1303, Cys1310–Cys1321, Cys1315–Cys1333, Cys1335–Cys1344, Cys1351–Cys1362, Cys1356–Cys1371, Cys1373–Cys1382, Cys1390–Cys1401, Cys1395–Cys1412, Cys1414–Cys1423, Cys1447–Cys1470, Cys1452–Cys1465, and Cys1461–Cys1477. O-linked (Glc...) serine glycosylation is present at Ser495. The Ca(2+) site is built by Asp506 and Lys507. Residues 527 to 563 (DVDECASTPCKNGAKCLDGPNSYTCQCTEGFTGRHCE) enclose the EGF-like 14; calcium-binding domain. The EGF-like 15; calcium-binding domain occupies 565–600 (DINECIPDPCHYGTCKDGIATFTCLCRPGYTGRLCD). Positions 602-638 (DINECLSQPCQNGGQCTDRENGYICTCPKGTTGVNCE) constitute an EGF-like 16; calcium-binding domain. The 36-residue stretch at 640–675 (NLDDCASNPCDYGKCIDKIDGYECTCEPGYTGKMCN) folds into the EGF-like 17; calcium-binding domain. The 37-residue stretch at 677–713 (NIDECASNPCRNGGTCKDKINGFTCVCPDGYHDHMCL) folds into the EGF-like 18; calcium-binding domain. The region spanning 715–750 (EVNECNSNPCIHGTCHDGINGYKCDCDAGWSGSNCD) is the EGF-like 19; calcium-binding domain. The 37-residue stretch at 752–788 (NNNECESNPCMNGGTCKDMTGAYICTCRAGFSGPNCQ) folds into the EGF-like 20; calcium-binding domain. The 37-residue stretch at 790 to 826 (NINECASNPCLNRGTCIDDVAGYKCNCMLPYTGAICE) folds into the EGF-like 21; calcium-binding domain. Residues 828–866 (VLAPCSGSPCKNGGRCKESEDYETFSCECPPGWQGQTCE) form the EGF-like 22 domain. The region spanning 868 to 904 (DMNECVNRPCRNGAMCQNTNGSYKCNCKPGYAGRHCE) is the EGF-like 23; calcium-binding domain. Asn887 carries an N-linked (GlcNAc...) asparagine glycan. Residues 906–942 (DIDDCQPNPCHNGGSCSDGINMFFCNCPAGFRGPKCE) form the EGF-like 24; calcium-binding domain. Residues 944–980 (DINECASNPCKNGANCTDCVNSYTCTCQPGFSGIHCE) form the EGF-like 25; calcium-binding domain. N-linked (GlcNAc...) asparagine glycosylation occurs at Asn958. The region spanning 982 to 1018 (NTPDCTESSCFNGGTCIDGINTFSCQCPPGFTGNYCQ) is the EGF-like 26 domain. The EGF-like 27; calcium-binding domain maps to 1020–1056 (DINECDSKPCLNGGTCQDSYGAYKCTCPQGYTGLNCQ). 2 consecutive EGF-like domains span residues 1058 to 1094 (LVRW…VYCD) and 1096 to 1142 (PSVS…SYCE). Residues 1144–1180 (QVDECSPNPCQNGATCTDYLGGYSCECVAGYHGVNCS) form the EGF-like 30; calcium-binding domain. Asn1178 is a glycosylation site (N-linked (GlcNAc...) asparagine). The region spanning 1182-1218 (EINECLSHPCHNGGTCIDLINTYKCSCPRGTQGVHCE) is the EGF-like 31; calcium-binding domain. Positions 1220–1264 (NVDDCTPFYDSVSLEPKCFNNGKCFDRVGGYNCICPPGFVGERCE) constitute an EGF-like 32; calcium-binding domain. EGF-like domains are found at residues 1266–1304 (DVNE…RRCD), 1306–1345 (VVDG…ATCE), 1347–1383 (DART…ATCQ), and 1386–1424 (VVSP…LFCH). An O-linked (Fuc...) threonine; alternate glycan is attached at Thr1400. Residue Thr1400 is glycosylated (O-linked (GalNAc...) threonine; alternate). LNR repeat units follow at residues 1447 to 1487 (CENE…PWKN), 1488 to 1529 (CTQS…CNPL), and 1530 to 1564 (YDQY…NMPE). Residues Asn1458, Asp1473, and Asp1476 each coordinate Ca(2+). The N-linked (GlcNAc...) asparagine glycan is linked to Asn1487. Disulfide bonds link Cys1488-Cys1512, Cys1494-Cys1507, Cys1503-Cys1519, Cys1534-Cys1547, and Cys1543-Cys1559. Asp1500 is a binding site for Ca(2+). Asn1508 carries N-linked (GlcNAc...) asparagine glycosylation. Residues Asp1515, Asp1518, Asp1540, Asp1555, and Asp1558 each contribute to the Ca(2+) site. An N-linked (GlcNAc...) asparagine glycan is attached at Asn1584. The chain crosses the membrane as a helical span at residues 1731-1751 (AMFSMLVIPLLIIFVIMVVIV). The Cytoplasmic segment spans residues 1752–2522 (NKKRRREHGQ…QRTHIPEAFK (771 aa)). ANK repeat units follow at residues 1877 to 1920 (DGFT…QLHN), 1925 to 1954 (TGET…DANV), 1958 to 1988 (MGRT…DLDA), 1992 to 2021 (DGTT…DVNA), 2025 to 2054 (FGKS…NKDM), and 2058 to 2087 (KEET…NRDI). Disordered stretches follow at residues 2146–2229 (MKPS…MPLN), 2365–2404 (LMQA…PFCS), and 2449–2522 (LTPP…EAFK). Residues 2184–2200 (SLLDSGSSGVLSPVDSL) show a composition bias toward low complexity. Positions 2218 to 2229 (SPFQQSPSMPLN) are enriched in polar residues. Over residues 2365–2390 (LMQAQQMQQQQNLQLHQSVQQQQHQN) the composition is skewed to low complexity. 2 stretches are compositionally biased toward polar residues: residues 2391 to 2404 (SNAT…PFCS) and 2449 to 2469 (LTPP…SHQL). Over residues 2479-2494 (PSPESPDQWSSSSPHS) the composition is skewed to low complexity. Polar residues predominate over residues 2495-2514 (NMSDWSEGISSPPTSMQPQR).

It belongs to the NOTCH family. In terms of processing, O-glycosylated on the EGF-like domains. Contains both O-linked fucose and O-linked glucose. O-linked glycosylation by galnt11 is involved in determination of left/right symmetry: glycosylation promotes activation of notch1, possibly by promoting cleavage by adam17, modulating the balance between motile and immotile (sensory) cilia at the left-right organiser (LRO). Post-translationally, synthesized in the endoplasmic reticulum as an inactive form which is proteolytically cleaved by a furin-like convertase in the trans-Golgi network before it reaches the plasma membrane to yield an active, ligand-accessible form. Cleavage results in a C-terminal fragment N(TM) and a N-terminal fragment N(EC). Following ligand binding, it is cleaved by adam17 to yield a membrane-associated intermediate fragment called notch extracellular truncation (NEXT). Following endocytosis, this fragment is then cleaved by presenilin dependent gamma-secretase to release a Notch-derived peptide containing the intracellular domain (NICD) from the membrane.

Its subcellular location is the cell membrane. The protein resides in the nucleus. In terms of biological role, functions as a receptor for membrane-bound ligands Jagged-1 (JAG1), Jagged-2 (JAG2) and Delta-1 (DLL1) to regulate cell-fate determination. Upon ligand activation through the released notch intracellular domain (NICD) it forms a transcriptional activator complex with RBPJ/RBPSUH and activates genes of the enhancer of split locus. Affects the implementation of differentiation, proliferation and apoptotic programs. Involved in angiogenesis; negatively regulates endothelial cell proliferation and migration and angiogenic sprouting. Involved in the maturation of both CD4(+) and CD8(+) cells in the thymus. Important for follicular differentiation and possibly cell fate selection within the follicle. During cerebellar development, functions as a receptor for neuronal DNER and is involved in the differentiation of Bergmann glia. Represses neuronal and myogenic differentiation. May play an essential role in postimplantation development, probably in some aspect of cell specification and/or differentiation. May be involved in mesoderm development, somite formation and neurogenesis. Involved in determination of left/right symmetry by modulating the balance between motile and immotile (sensory) cilia at the left-right organiser (LRO). This chain is Neurogenic locus notch homolog protein 1 (notch1), found in Xenopus tropicalis (Western clawed frog).